The sequence spans 838 residues: Urease (838 aa).

Residues 400-838 enclose the Urease domain; the sequence is GAIDCHVHFI…VPLSRNYFLF (439 aa). Residues H405, H407, and K488 each contribute to the Ni(2+) site. Position 488 is an N6-carboxylysine (K488). H490 is a binding site for substrate. Ni(2+) is bound by residues H517 and H543. The active-site Proton donor is the H591. D631 provides a ligand contact to Ni(2+).

This sequence in the C-terminal section; belongs to the metallo-dependent hydrolases superfamily. Urease alpha subunit family. As to quaternary structure, homohexamer. Other oligomeric forms may exist depending on pH and presence of salts. Requires Ni(2+) as cofactor. Post-translationally, carboxylation allows a single lysine to coordinate two nickel ions.

The enzyme catalyses urea + 2 H2O + H(+) = hydrogencarbonate + 2 NH4(+). Its pathway is nitrogen metabolism; urea degradation; CO(2) and NH(3) from urea (urease route): step 1/1. Its activity is regulated as follows. Requires the three urease accessory proteins URED, UREF AND UREG for its activation. In terms of biological role, urea hydrolase involved in nitrogen recycling from ureide, purine, and arginine catabolism. The chain is Urease from Arabidopsis thaliana (Mouse-ear cress).